Reading from the N-terminus, the 102-residue chain is RNA-binding protein Hfq (102 aa).

The Sm domain occupies 9-68 (DPFLNALRRERVPVSIYLVNGIKLQGQIESFDQFVILLKNTVSQMVYKHAISTVVPSRPV). The segment at 63–102 (VPSRPVSHHSNNAGGGSNNYHHSNNAQPSSAASQDSEDAE) is disordered. Low complexity predominate over residues 70 to 96 (HHSNNAGGGSNNYHHSNNAQPSSAASQ).

It belongs to the Hfq family. In terms of assembly, homohexamer.

Its function is as follows. RNA chaperone that binds small regulatory RNA (sRNAs) and mRNAs to facilitate mRNA translational regulation in response to envelope stress, environmental stress and changes in metabolite concentrations. Also binds with high specificity to tRNAs. The protein is RNA-binding protein Hfq of Cronobacter sakazakii (strain ATCC BAA-894) (Enterobacter sakazakii).